Consider the following 315-residue polypeptide: Methionine import ATP-binding protein MetN (315 aa).

One can recognise an ABC transporter domain in the interval I2 to V219. G16–S23 contacts ATP.

It belongs to the ABC transporter superfamily. Methionine importer (TC 3.A.1.24) family. As to quaternary structure, the complex is composed of two ATP-binding proteins (MetN), two transmembrane proteins (MetI) and a solute-binding protein (MetQ).

It localises to the cell inner membrane. It carries out the reaction L-methionine(out) + ATP + H2O = L-methionine(in) + ADP + phosphate + H(+). It catalyses the reaction D-methionine(out) + ATP + H2O = D-methionine(in) + ADP + phosphate + H(+). Functionally, part of the ABC transporter complex MetNIQ involved in methionine import. Responsible for energy coupling to the transport system. The chain is Methionine import ATP-binding protein MetN from Salmonella enteritidis.